Here is a 327-residue protein sequence, read N- to C-terminus: Methionyl-tRNA formyltransferase (327 aa).

121–124 lines the (6S)-5,6,7,8-tetrahydrofolate pocket; the sequence is SLLP.

The protein belongs to the Fmt family.

The catalysed reaction is L-methionyl-tRNA(fMet) + (6R)-10-formyltetrahydrofolate = N-formyl-L-methionyl-tRNA(fMet) + (6S)-5,6,7,8-tetrahydrofolate + H(+). In terms of biological role, attaches a formyl group to the free amino group of methionyl-tRNA(fMet). The formyl group appears to play a dual role in the initiator identity of N-formylmethionyl-tRNA by promoting its recognition by IF2 and preventing the misappropriation of this tRNA by the elongation apparatus. In Burkholderia pseudomallei (strain 668), this protein is Methionyl-tRNA formyltransferase.